A 230-amino-acid polypeptide reads, in one-letter code: Orotidine 5'-phosphate decarboxylase (230 aa).

Substrate-binding positions include aspartate 10, lysine 32, aspartate 59 to threonine 68, threonine 119, arginine 180, glutamine 189, glycine 209, and arginine 210. The active-site Proton donor is the lysine 61.

The protein belongs to the OMP decarboxylase family. Type 1 subfamily. As to quaternary structure, homodimer.

It catalyses the reaction orotidine 5'-phosphate + H(+) = UMP + CO2. The protein operates within pyrimidine metabolism; UMP biosynthesis via de novo pathway; UMP from orotate: step 2/2. Catalyzes the decarboxylation of orotidine 5'-monophosphate (OMP) to uridine 5'-monophosphate (UMP). This chain is Orotidine 5'-phosphate decarboxylase, found in Haemophilus ducreyi (strain 35000HP / ATCC 700724).